The primary structure comprises 240 residues: Sugar fermentation stimulation protein homolog (240 aa).

Belongs to the SfsA family.

In Methanothermobacter thermautotrophicus (strain ATCC 29096 / DSM 1053 / JCM 10044 / NBRC 100330 / Delta H) (Methanobacterium thermoautotrophicum), this protein is Sugar fermentation stimulation protein homolog.